A 1466-amino-acid polypeptide reads, in one-letter code: ABC transporter G family member 40 (1466 aa).

A disordered region spans residues 1-21 (MSHRHHAALVASASGRSPSWG). The 274-residue stretch at 176–449 (GLIGQFGSSN…FEASGFRCPQ (274 aa)) folds into the ABC transporter 1 domain. Residue 209–216 (GPPSSGKS) coordinates ATP. Residues 527 to 740 (ESLKAVLCRE…SQNAISINEF (214 aa)) form the ABC transmembrane type-2 1 domain. The next 6 membrane-spanning stretches (helical) occupy residues 545–565 (FLYIFKVTQLIILAFLSMTVF), 581–601 (FLGALTFNLITVMFNGLSELN), 633–653 (VPVSLVEATVWVVITYYVMGF), 664–684 (FLAFFVTHLMAMALFRFLGAI), 690–710 (IAISFGMLVLLIVFVFGGFVI), and 776–796 (FWLSIGALVGFIILFNTLYIL). Over residues 821-831 (YTETRNEEHRS) the composition is skewed to basic and acidic residues. The segment at 821-851 (YTETRNEEHRSRTSTTTSSIPTSANGEGNRP) is disordered. The segment covering 833–843 (TSTTTSSIPTS) has biased composition (low complexity). The ABC transporter 2 domain maps to 865 to 1117 (LCFNHLNYYV…KLVEYFETIL (253 aa)). 910-917 (GVSGAGKT) serves as a coordination point for ATP. Positions 1190-1404 (IQCVANLWKQ…TIYGVIASQF (215 aa)) constitute an ABC transmembrane type-2 2 domain. The next 7 membrane-spanning stretches (helical) occupy residues 1209–1229 (YNSLRYLTTFLYGLFFGTVFW), 1241–1261 (LYNLLGATYAAIFFIGATNCM), 1297–1317 (FIYNIIQGILYTVIIYAMIGY), 1327–1347 (FLFFIVSSFNYFTFFGMMLVA), 1355–1375 (ANILITFALPLWNLFAGFLIF), 1396–1416 (IYGVIASQFGGNGGSISVPGG), and 1435–1455 (FLGYVILAHFGFMAAFVLIFG).

The protein belongs to the ABC transporter superfamily. ABCG family. PDR (TC 3.A.1.205) subfamily.

The protein resides in the membrane. The chain is ABC transporter G family member 40 from Oryza sativa subsp. japonica (Rice).